Reading from the N-terminus, the 171-residue chain is Putative pre-16S rRNA nuclease (171 aa).

The protein belongs to the YqgF nuclease family.

It localises to the cytoplasm. In terms of biological role, could be a nuclease involved in processing of the 5'-end of pre-16S rRNA. The protein is Putative pre-16S rRNA nuclease of Corynebacterium diphtheriae (strain ATCC 700971 / NCTC 13129 / Biotype gravis).